The following is a 455-amino-acid chain: Phosphoglucosamine mutase (455 aa).

The active-site Phosphoserine intermediate is Ser108. Ser108, Asp248, Asp250, and Asp252 together coordinate Mg(2+). Ser108 is subject to Phosphoserine.

The protein belongs to the phosphohexose mutase family. The cofactor is Mg(2+). Activated by phosphorylation.

It carries out the reaction alpha-D-glucosamine 1-phosphate = D-glucosamine 6-phosphate. Catalyzes the conversion of glucosamine-6-phosphate to glucosamine-1-phosphate. The chain is Phosphoglucosamine mutase from Leuconostoc mesenteroides subsp. mesenteroides (strain ATCC 8293 / DSM 20343 / BCRC 11652 / CCM 1803 / JCM 6124 / NCDO 523 / NBRC 100496 / NCIMB 8023 / NCTC 12954 / NRRL B-1118 / 37Y).